Consider the following 436-residue polypeptide: MKTLRELRNKISFDKNIDSGSSSSNIGGSSSNSSGTTNKRSSGNFNGSSASSSPSSSTNIDYNIPTFSNIQNIDWKSISSVEKIDFGNSNIFLLITFNNNNNINNINNLNCNCVNNNNNNICNNNCINNNNNTNDENPSIINNYNESQILLKSSSTIAHDVYAYVLEGILKYPIPEMRLLDFSNLEYTEMSYNLLIHSKDDQSLNDFIKSELEKSFFLILEYRNNGKRFNELNHKEYFSGSKGGKKFKQLGKIIAFDIFCNNFCKLPSPPLNWNSSTFFSNILCYDSPDKNGWYFSLINSNISFLNTSPFTIGYRDHLNRLKLLLFSIFQNPSTESVQIKLMRDHLLKCQGIKLSGSSVSYLQKGIAKGIKSIVNCINFTVLENTKEKVKNIVKLDNNNIWKKSIDSIYCPFLLDVLNEIVIEFANYREKTYFIKA.

Residues 14-58 (DKNIDSGSSSSNIGGSSSNSSGTTNKRSSGNFNGSSASSSPSSST) are disordered. Over residues 18–57 (DSGSSSSNIGGSSSNSSGTTNKRSSGNFNGSSASSSPSSS) the composition is skewed to low complexity.

It belongs to the protein kinase superfamily. AFK Ser/Thr protein kinase family.

The polypeptide is Putative actin-fragmin kinase DDB_G0268748 (Dictyostelium discoideum (Social amoeba)).